We begin with the raw amino-acid sequence, 585 residues long: Type IV pilus assembly ATPase TfpB (585 aa).

346 to 351 (GSGKTT) serves as a coordination point for ATP. Positions 476, 479, 511, and 514 each coordinate Zn(2+).

It belongs to the GSP E family.

The protein resides in the cytoplasm. ATPase component of the type IV pilus (T4P). Acts as a molecular motor to provide the energy that is required for biogenesis of the pilus and the extrusion of substrates generated in the cytoplasm. TfpB is required for optimal T4P extension and, consequently, efficient natural transformation. May play a role in initiating T4P extension. The protein is Type IV pilus assembly ATPase TfpB of Acinetobacter baylyi (strain ATCC 33305 / BD413 / ADP1).